We begin with the raw amino-acid sequence, 65 residues long: Alpha-conotoxin Mr1.1 (65 aa).

Residues 1–21 (MGMRMMFTVFLLVVLATTVVS) form the signal peptide. Positions 22 to 48 (FTSDRASDGRKAAAKDKASDLVALTVK) are excised as a propeptide. Intrachain disulfides connect Cys50-Cys56 and Cys51-Cys64. The ser-Xaa-Pro motif, crucial for potent interaction with nAChR stretch occupies residues 52-54 (SHP). Cys64 carries the cysteine amide modification.

This sequence belongs to the conotoxin A superfamily. In terms of tissue distribution, expressed by the venom duct.

It is found in the secreted. In terms of biological role, alpha-conotoxins act on postsynaptic membranes, they bind to the nicotinic acetylcholine receptors (nAChR) and thus inhibit them. This toxin potently and reversibly inhibits alpha-9-alpha-10/CHRNA9-CHRNA10 (IC(50)=92 nM (human) and IC(50)=8.3 nM (rat)) and human alpha3-beta-2/CHRNA3-CHRNB2 nAChR (IC(50)=218.9 nM). Also moderately inhibits human alpha-3-beta-4/CHRNA3-CHRNB4 (60% inhibition at 1 uM), rat alpha-7/CHRNA7 (65% inhibition at 1 uM) and rat alpha-3-beta-2/CHRNA3-CHRNB2 nAChR (50-70% inhibition at 10 uM). In two rat pain models, this toxin shows analgesic effect. The chain is Alpha-conotoxin Mr1.1 from Conus marmoreus (Marble cone).